The sequence spans 378 residues: Trans-enoyl reductase poxP (378 aa).

62–65 provides a ligand contact to NADP(+); that stretch reads CDWK. 151–158 serves as a coordination point for substrate; that stretch reads SVFATLWI. Residues 187 to 190, 210 to 213, Tyr228, and 275 to 276 contribute to the NADP(+) site; these read STST, SPHN, and LE. Substrate is bound at residue 295 to 299; the sequence is GLAAS. NADP(+) is bound at residue 364–365; the sequence is TS.

Belongs to the zinc-containing alcohol dehydrogenase family. As to quaternary structure, monomer.

Its pathway is secondary metabolite biosynthesis. Functionally, trans-enoyl reductase; part of the gene cluster that mediates the biosynthesis of oxaleimides, cytotoxic compounds containing an unusual disubstituted succinimide moiety. The first step of the pathway is provided by the HR-PKS poxF that serves in a new mode of collaborative biosynthesis with the PKS-NRPS poxE, by providing the olefin containing amino acid substrate via the synthesis of an ACP-bound dec-4-enoate. The cytochrome P450 monooxygenase poxM-catalyzed oxidation at the alpha-position creates the enzyme-bound 2-hydroxydec-4-enoyl-ACP thioester, which may be prone to spontaneous hydrolysis to yield 2-hydroxydec-4-enoic acid due to increased electrophilicity of the carbonyl. 2-hydroxydec-4-enoic acid can then be further oxidized by poxM to yield the alpha-ketoacid 2-oxodec-4-enoicacid, which is reductively aminated by the aminotransferase poxL to yield (S,E)-2-aminodec-4-enoic acid. The Hybrid PKS-NRPS synthetase poxE then performs condensation between the octaketide product of its PKS modules and the amino group of (S,E)-2-aminodec-4-enoic acid which is activated and incorporated by the adenylation domain. The resulting aminoacyl product can be cyclized by the Diels-Alderase PoxQ and reductively released by the reductive (R) domain of poxE to yield an aldehyde intermediate. The released aldehyde is then substrate for a Knoevenagel condensation by the hydrolyase poxO followed by an oxidation at the 5-position of the pyrrolidone ring. The presence of the olefin from the amino acid building block allows for migration of the substituted allyl group to occur. This allylic transposition reaction takes place in a conjugate addition, semipinacol-like fashion to yield a succinimide intermediate. Iterative two-electron oxidations of the C7 methyl of the succinimide intermediate to the carboxylic acid can be catalyzed by one of two remaining cytochrome P450 monooxygenasess poxC or poxD to yield oxaleimide A. Subsequent oxidation yields the maleimide scaffold oxaleimide I. Both oxaleimide A and oxaleimide I can undergo oxidative modifications in the decalin ring to yield the series of products oxaleimides B to H. In Penicillium oxalicum, this protein is Trans-enoyl reductase poxP.